The primary structure comprises 152 residues: Endoribonuclease YbeY (152 aa).

The Zn(2+) site is built by His-113, His-117, and His-123.

Belongs to the endoribonuclease YbeY family. It depends on Zn(2+) as a cofactor.

The protein localises to the cytoplasm. Functionally, single strand-specific metallo-endoribonuclease involved in late-stage 70S ribosome quality control and in maturation of the 3' terminus of the 16S rRNA. The chain is Endoribonuclease YbeY from Acidovorax sp. (strain JS42).